The following is an 852-amino-acid chain: Lon protease homolog 2, peroxisomal (852 aa).

An N-acetylserine modification is found at S2. A Lon N-terminal domain is found at 13 to 222 (LPLLLTHESV…MTIPLLVRQI (210 aa)). 375–382 (GPPGVGKT) is an ATP binding site. Positions 651–837 (LSQPGVAIGL…DEVLNAAFDG (187 aa)) constitute a Lon proteolytic domain. Active-site residues include S743 and K786. The short motif at 850–852 (SKL) is the Microbody targeting signal element.

It belongs to the peptidase S16 family. As to quaternary structure, interacts with PEX5. Interacts with TYSND1. May interact with enzymes involved in beta-oxidation of fatty acids, including ACOX1/AOX.

The protein localises to the peroxisome matrix. The enzyme catalyses Hydrolysis of proteins in presence of ATP.. Its function is as follows. ATP-dependent serine protease that mediates the selective degradation of misfolded and unassembled polypeptides in the peroxisomal matrix. Necessary for type 2 peroxisome targeting signal (PTS2)-containing protein processing and facilitates peroxisome matrix protein import. May indirectly regulate peroxisomal fatty acid beta-oxidation through degradation of the self-processed forms of TYSND1. This chain is Lon protease homolog 2, peroxisomal (Lonp2), found in Mus musculus (Mouse).